The chain runs to 1213 residues: DNA-directed RNA polymerase subunit beta' (1213 aa).

Zn(2+)-binding residues include Cys60, Cys62, Cys75, and Cys78. Residues Asp450, Asp452, and Asp454 each contribute to the Mg(2+) site. Residues Cys819, Cys893, Cys900, and Cys903 each contribute to the Zn(2+) site.

Belongs to the RNA polymerase beta' chain family. As to quaternary structure, the RNAP catalytic core consists of 2 alpha, 1 beta, 1 beta' and 1 omega subunit. When a sigma factor is associated with the core the holoenzyme is formed, which can initiate transcription. Mg(2+) is required as a cofactor. Zn(2+) serves as cofactor.

The catalysed reaction is RNA(n) + a ribonucleoside 5'-triphosphate = RNA(n+1) + diphosphate. In terms of biological role, DNA-dependent RNA polymerase catalyzes the transcription of DNA into RNA using the four ribonucleoside triphosphates as substrates. The sequence is that of DNA-directed RNA polymerase subunit beta' from Streptococcus pyogenes serotype M6 (strain ATCC BAA-946 / MGAS10394).